The sequence spans 1025 residues: Multidrug resistance protein MdtC (1025 aa).

Helical transmembrane passes span 3-23, 333-353, 360-380, 387-407, 431-451, 463-483, 528-548, 853-873, 875-895, 897-917, 953-973, and 984-1004; these read FFAL…AITL, EVEQ…FLFL, IIPA…MYLC, LSLM…IVVL, VGFT…PLLL, FAVT…TLTP, LVGV…ISIP, VILI…LYES, VHPL…LLAL, LFNA…IGIV, PIMM…LSGG, and ITIV…TPVV.

This sequence belongs to the resistance-nodulation-cell division (RND) (TC 2.A.6) family. MdtC subfamily. Part of a tripartite efflux system composed of MdtA, MdtB and MdtC. MdtC forms a heteromultimer with MdtB.

Its subcellular location is the cell inner membrane. Its function is as follows. The MdtABC tripartite complex confers resistance against novobiocin and deoxycholate. This chain is Multidrug resistance protein MdtC, found in Escherichia coli O127:H6 (strain E2348/69 / EPEC).